Reading from the N-terminus, the 419-residue chain is Caspase-12 (419 aa).

Residues 1-92 form the CARD domain; it reads MAARRTHERD…QLSLQFSNDE (92 aa). At Ser85 the chain carries Phosphoserine. The interval 88–113 is disordered; that stretch reads FSNDEDDGPQKICTPSSPSESKRKVE. Active-site residues include His250 and Cys298.

This sequence belongs to the peptidase C14A family. In terms of assembly, heterotetramer that consists of two anti-parallel arranged heterodimers, each one formed by two subunits (Potential). Interacts with TRAF2 under resting conditions; this interaction is reduced in ER stress conditions. In terms of tissue distribution, mainly expressed in skeletal muscle and lung.

Functionally, involved in the activation cascade of caspases responsible for apoptosis execution. The polypeptide is Caspase-12 (Casp12) (Mus musculus (Mouse)).